A 319-amino-acid polypeptide reads, in one-letter code: Ribonucleoside-diphosphate reductase small chain (319 aa).

Fe cation-binding residues include Asp70, Glu101, and His104. Residue Tyr108 is part of the active site. Glu163, Glu197, and His200 together coordinate Fe cation. An interaction with R1 region spans residues 313–319; that stretch reads FSLDVDF.

This sequence belongs to the ribonucleoside diphosphate reductase small chain family. In terms of assembly, interacts with RNR1/OPG080 subunit. Can interact with host RNR1 supunit. It depends on Fe cation as a cofactor.

It carries out the reaction a 2'-deoxyribonucleoside 5'-diphosphate + [thioredoxin]-disulfide + H2O = a ribonucleoside 5'-diphosphate + [thioredoxin]-dithiol. Its function is as follows. Ribonucleoside-diphosphate reductase holoenzyme provides the precursors necessary for viral DNA synthesis. Allows virus growth in non-dividing cells. Catalyzes the biosynthesis of deoxyribonucleotides from the corresponding ribonucleotides. The sequence is that of Ribonucleoside-diphosphate reductase small chain (OPG048) from Vaccinia virus (strain L-IVP) (VACV).